We begin with the raw amino-acid sequence, 461 residues long: TWiK family of potassium channels protein 18 (461 aa).

Topologically, residues 1-21 (MAIVAQGVSTILTTFQKTFKG) are cytoplasmic. A helical transmembrane segment spans residues 22–42 (LLPLIILVAYTLLGAWIFWMI). A glycan (N-linked (GlcNAc...) asparagine) is linked at Asn-88. Positions 116–136 (FLGSIFYCMTVYTTIGYGNIV) form an intramembrane region, pore-forming. The chain crosses the membrane as a helical span at residues 144–164 (FATILYAFIGIPLTVLSLYCL). Residues 165-224 (GSLFAKGCKMLWRFFLKSTRVVSKDLSNKISEAADNIEEGTTAITPSAEKTENNDDDLLS) lie on the Cytoplasmic side of the membrane. The helical transmembrane segment at 225–245 (FPISGLLLITVIWVIFCAVLF) threads the bilayer. Positions 253 to 273 (FGTSLYFTLISFTTIGFGDIL) form an intramembrane region, pore-forming. Residues 281 to 301 (PIVGVLLLIGLSLVSTVMTLI) traverse the membrane as a helical segment. The Cytoplasmic portion of the chain corresponds to 302–461 (QQQIEALASG…GNEDYLEHDI (160 aa)). Positions 328–347 (REDGEVDEHVDPEEDPENNK) are disordered.

The protein belongs to the two pore domain potassium channel (TC 1.A.1.8) family. As to expression, expressed in body wall muscle.

The protein resides in the membrane. Functionally, outwardly rectifying potassium channel protein; activity is sharply augmented by increase in temperature. The sequence is that of TWiK family of potassium channels protein 18 (twk-18) from Caenorhabditis elegans.